The chain runs to 265 residues: Phosphatidylglycerol--prolipoprotein diacylglyceryl transferase (265 aa).

7 helical membrane passes run 11-31, 56-76, 91-111, 120-140, 173-193, 198-218, and 233-253; these read AVSI…FGFI, MVTW…ILFY, IWHG…AVWL, FLSV…FGRI, QLYE…WFSG, VGAV…AVEF, and WLTM…WLLL. R139 contributes to the a 1,2-diacyl-sn-glycero-3-phospho-(1'-sn-glycerol) binding site.

This sequence belongs to the Lgt family.

It localises to the cell inner membrane. The enzyme catalyses L-cysteinyl-[prolipoprotein] + a 1,2-diacyl-sn-glycero-3-phospho-(1'-sn-glycerol) = an S-1,2-diacyl-sn-glyceryl-L-cysteinyl-[prolipoprotein] + sn-glycerol 1-phosphate + H(+). The protein operates within protein modification; lipoprotein biosynthesis (diacylglyceryl transfer). Functionally, catalyzes the transfer of the diacylglyceryl group from phosphatidylglycerol to the sulfhydryl group of the N-terminal cysteine of a prolipoprotein, the first step in the formation of mature lipoproteins. This Nitratidesulfovibrio vulgaris (strain DSM 19637 / Miyazaki F) (Desulfovibrio vulgaris) protein is Phosphatidylglycerol--prolipoprotein diacylglyceryl transferase.